A 395-amino-acid polypeptide reads, in one-letter code: Accessory Sec system protein translocase subunit SecY2 (395 aa).

Helical transmembrane passes span 13 to 33 (VSFS…PLPF), 63 to 83 (ISIF…IQLL), 102 to 122 (LMQF…VFAF), 128 to 148 (GLED…VVWL), 157 to 177 (VGAS…PNII), 190 to 210 (WIWL…WLAF), 239 to 259 (MAAM…LMVG), 272 to 292 (VFQA…FTFV), 326 to 346 (LIWI…VFGL), and 355 to 375 (YAGF…MGGI).

The protein belongs to the SecY/SEC61-alpha family. SecY2 subfamily. In terms of assembly, component of the accessory SecA2/SecY2 protein translocase complex required to export cell wall proteins. May form heterotrimers with SecE and SecG subunits.

It is found in the cell membrane. Part of the accessory SecA2/SecY2 system specifically required for export of possible cell wall proteins. The central subunit of a protein translocation channel. The sequence is that of Accessory Sec system protein translocase subunit SecY2 from Lactobacillus johnsonii (strain CNCM I-12250 / La1 / NCC 533).